The chain runs to 840 residues: Leucine-zipper-like transcriptional regulator 1 (840 aa).

Ala2 is subject to N-acetylalanine. 6 Kelch repeats span residues 79-128 (AIYV…VYGS), 130-185 (MFVF…VYSD), 187-238 (LWIF…VCRD), 239-285 (KMFV…QRRY), 295-341 (HLYV…PERA), and 399-450 (AMYI…FVLG). 2 BTB domains span residues 443-537 (CDVE…KYPR) and 667-736 (CDIT…NMPP).

The protein belongs to the LZTR1 family. As to quaternary structure, homodimer. Component of the BCR(LZTR1) E3 ubiquitin ligase complex, at least composed of CUL3, LZTR1 and RBX1. Interacts with Ras (K-Ras/KRAS, N-Ras/NRAS and H-Ras/HRAS). Interacts with RAF1. Interacts with SHOC2. Interacts with PPP1CB. Phosphorylated on tyrosine upon induction of apoptosis, leading to its degradation by the proteasome.

It is found in the endomembrane system. The protein resides in the recycling endosome. It localises to the golgi apparatus. It participates in protein modification; protein ubiquitination. Its function is as follows. Substrate-specific adapter of a BCR (BTB-CUL3-RBX1) E3 ubiquitin-protein ligase complex that mediates ubiquitination of Ras (K-Ras/KRAS, N-Ras/NRAS and H-Ras/HRAS). Is a negative regulator of RAS-MAPK signaling that acts by controlling Ras levels and decreasing Ras association with membranes. The polypeptide is Leucine-zipper-like transcriptional regulator 1 (Homo sapiens (Human)).